The primary structure comprises 126 residues: Fluoride-specific ion channel FluC 2 (126 aa).

4 helical membrane passes run 11–31 (VLLI…ICEH), 36–56 (LGIL…MYDA), 69–89 (AFGT…VQSF), and 93–113 (FLPA…GVFF). 2 residues coordinate Na(+): Gly76 and Thr79.

The protein belongs to the fluoride channel Fluc/FEX (TC 1.A.43) family.

It is found in the cell membrane. It carries out the reaction fluoride(in) = fluoride(out). With respect to regulation, na(+) is not transported, but it plays an essential structural role and its presence is essential for fluoride channel function. Functionally, fluoride-specific ion channel. Important for reducing fluoride concentration in the cell, thus reducing its toxicity. In Methanosarcina mazei (strain ATCC BAA-159 / DSM 3647 / Goe1 / Go1 / JCM 11833 / OCM 88) (Methanosarcina frisia), this protein is Fluoride-specific ion channel FluC 2.